The primary structure comprises 197 residues: Xanthine phosphoribosyltransferase (197 aa).

Residues leucine 20 and asparagine 27 each contribute to the xanthine site. 128-132 (ANGQA) serves as a coordination point for 5-phospho-alpha-D-ribose 1-diphosphate. Residue lysine 156 participates in xanthine binding.

It belongs to the purine/pyrimidine phosphoribosyltransferase family. Xpt subfamily. As to quaternary structure, homodimer.

It is found in the cytoplasm. It carries out the reaction XMP + diphosphate = xanthine + 5-phospho-alpha-D-ribose 1-diphosphate. It participates in purine metabolism; XMP biosynthesis via salvage pathway; XMP from xanthine: step 1/1. In terms of biological role, converts the preformed base xanthine, a product of nucleic acid breakdown, to xanthosine 5'-monophosphate (XMP), so it can be reused for RNA or DNA synthesis. The chain is Xanthine phosphoribosyltransferase from Bacillus cereus (strain ATCC 14579 / DSM 31 / CCUG 7414 / JCM 2152 / NBRC 15305 / NCIMB 9373 / NCTC 2599 / NRRL B-3711).